Reading from the N-terminus, the 436-residue chain is S-locus-specific glycoprotein S6 (436 aa).

Residues 1–31 (MKGVRKPYDNSYTLSFLLVFFVLILFCPAFS) form the signal peptide. Positions 34–156 (TLSSTESLRI…SNNDASEYLW (123 aa)) constitute a Bulb-type lectin domain. N-linked (GlcNAc...) asparagine glycans are attached at residues asparagine 46, asparagine 64, asparagine 114, asparagine 121, asparagine 245, asparagine 261, and asparagine 390. In terms of domain architecture, PAN spans 351-431 (CSGDGFTRMK…HGQDLYVRLA (81 aa)). Cystine bridges form between cysteine 381–cysteine 406 and cysteine 389–cysteine 391.

As to expression, stigma.

In terms of biological role, involved in sporophytic self-incompatibility system (the inability of flowering plants to achieve self-fertilization). The chain is S-locus-specific glycoprotein S6 (SLSG) from Brassica oleracea (Wild cabbage).